The following is a 413-amino-acid chain: Gamma-glutamyl phosphate reductase (413 aa).

Belongs to the gamma-glutamyl phosphate reductase family.

Its subcellular location is the cytoplasm. The enzyme catalyses L-glutamate 5-semialdehyde + phosphate + NADP(+) = L-glutamyl 5-phosphate + NADPH + H(+). The protein operates within amino-acid biosynthesis; L-proline biosynthesis; L-glutamate 5-semialdehyde from L-glutamate: step 2/2. In terms of biological role, catalyzes the NADPH-dependent reduction of L-glutamate 5-phosphate into L-glutamate 5-semialdehyde and phosphate. The product spontaneously undergoes cyclization to form 1-pyrroline-5-carboxylate. The polypeptide is Gamma-glutamyl phosphate reductase (Lactococcus lactis subsp. cremoris (strain MG1363)).